Here is a 155-residue protein sequence, read N- to C-terminus: Large-conductance mechanosensitive channel (155 aa).

The next 3 membrane-spanning stretches (helical) occupy residues 16–36 (VVDM…VNNL), 40–60 (VILP…LYII), and 88–108 (GVFL…FLLV).

This sequence belongs to the MscL family. In terms of assembly, homopentamer.

It localises to the cell inner membrane. Its function is as follows. Channel that opens in response to stretch forces in the membrane lipid bilayer. May participate in the regulation of osmotic pressure changes within the cell. In Chlorobium chlorochromatii (strain CaD3), this protein is Large-conductance mechanosensitive channel.